We begin with the raw amino-acid sequence, 203 residues long: Microtubule-associated protein Jupiter (203 aa).

Phosphoserine is present on Ser30. Phosphothreonine occurs at positions 41 and 102. Positions 123-132 (LISKGNYNGK) are enriched in polar residues. Disordered regions lie at residues 123–163 (LISK…GNPV) and 182–203 (NGGS…SGLW). The segment covering 133 to 146 (SGSVSSASSSVSSS) has biased composition (low complexity). 2 positions are modified to phosphoserine: Ser135 and Ser146.

This sequence belongs to the MAP Jupiter family.

The protein localises to the nucleus. Its subcellular location is the cytoplasm. It localises to the cytoskeleton. It is found in the spindle. Binds to all microtubule populations. The polypeptide is Microtubule-associated protein Jupiter (Drosophila mojavensis (Fruit fly)).